We begin with the raw amino-acid sequence, 319 residues long: Cobalamin biosynthesis protein CobD (319 aa).

The next 5 membrane-spanning stretches (helical) occupy residues 56 to 76, 78 to 98, 153 to 173, 204 to 224, and 296 to 316; these read VMWL…LALA, GIHP…ALAG, VDGI…LAMA, VANF…AVLC, and LMWV…YWLV.

It belongs to the CobD/CbiB family.

It is found in the cell membrane. Its pathway is cofactor biosynthesis; adenosylcobalamin biosynthesis. Converts cobyric acid to cobinamide by the addition of aminopropanol on the F carboxylic group. The sequence is that of Cobalamin biosynthesis protein CobD from Klebsiella pneumoniae subsp. pneumoniae (strain ATCC 700721 / MGH 78578).